The chain runs to 397 residues: Cathepsin E (397 aa).

An N-terminal signal peptide occupies residues 1 to 16 (MKQFLVVLLILSFVHG). Residues 17-49 (IIRVPLKRQKSMRKILKEKGKLSHLWTKQGNEF) constitute a propeptide, activation peptide. Residues 74-385 (YFGQISIGTP…DRGNNRVGFA (312 aa)) enclose the Peptidase A1 domain. The active site involves aspartate 92. An intrachain disulfide couples cysteine 105 to cysteine 110. Asparagine 139 carries an N-linked (GlcNAc...) asparagine glycan. Cysteines 268 and 272 form a disulfide. The active site involves aspartate 277. A disulfide bond links cysteine 310 and cysteine 344.

Belongs to the peptidase A1 family. In terms of assembly, homodimer; disulfide-linked. Glycosylated. Contains high mannose-type oligosaccharide. In terms of tissue distribution, found in the larval foregut and adult stomach.

It is found in the endosome. It carries out the reaction Similar to cathepsin D, but slightly broader specificity.. Functionally, may have a role in immune function. Probably involved in the processing of antigenic peptides during MHC class II-mediated antigen presentation. This chain is Cathepsin E (CTSE), found in Aquarana catesbeiana (American bullfrog).